The chain runs to 291 residues: Insulin-like growth factor-binding protein 3 (291 aa).

Positions 1 to 27 (MLRARPALWAAALTALTLLRGPPAARA) are cleaved as a signal peptide. An IGF-binding region spans residues 28–134 (GAGTMGAGPV…LRPYLLPSAS (107 aa)). The region spanning 36-119 (PVVRCEPCDA…LDGRGLCANA (84 aa)) is the IGFBP N-terminal domain. 6 disulfides stabilise this stretch: cysteine 40–cysteine 69, cysteine 43–cysteine 71, cysteine 51–cysteine 72, cysteine 60–cysteine 75, cysteine 83–cysteine 96, and cysteine 90–cysteine 116. N-linked (GlcNAc...) asparagine glycosylation is found at asparagine 118 and asparagine 136. 2 disordered regions span residues 132–162 (SASG…RVPV) and 177–211 (KGHA…TEYG). Residues 146 to 155 (MGSTENQAGP) show a composition bias toward polar residues. At serine 148 the chain carries Phosphoserine. The segment covering 177-190 (KGHAKDSQRYKVDY) has biased composition (basic and acidic residues). Polar residues predominate over residues 191–202 (ESQSTDTQNFSS). Asparagine 199 is a glycosylation site (N-linked (GlcNAc...) asparagine). At serine 201 the chain carries Phosphoserine. The Thyroglobulin type-1 domain maps to 210–285 (YGPCRREMED…DVKGKGDVHC (76 aa)). Intrachain disulfides connect cysteine 213/cysteine 240, cysteine 251/cysteine 262, and cysteine 264/cysteine 285.

As to quaternary structure, interacts with XLKD1. Binds IGF2 more than IGF1. Forms a ternary complex of about 140 to 150 kDa with IGF1 or IGF2 and a 85 kDa glycoprotein (ALS). Interacts with humanin; humanin competes with importin KPNB1 for binding to IGFBP3, blocking IGFBP3 nuclear import and IGFBP3-mediated apoptosis. Interacts with TMEM219. Interacts with RXRA; this interaction modulates the transcriptional activity of RXRA. Interacts with LRP1; this interaction mediates cell growth inhibition independent of IGF1. In terms of processing, phosphorylated by FAM20C in the extracellular medium. Phosphorylated by CK2; resulting in decreased nuclear localization. Plasma; expressed by most tissues.

Its subcellular location is the secreted. It is found in the nucleus. Multifunctional protein that plays a critical role in regulating the availability of IGFs such as IGF1 and IGF2 to their receptors and thereby regulates IGF-mediated cellular processes including proliferation, differentiation, and apoptosis in a cell-type specific manner. Also exhibits IGF-independent antiproliferative and apoptotic effects mediated by its receptor TMEM219/IGFBP-3R. Inhibits the positive effect of humanin on insulin sensitivity. Promotes testicular germ cell apoptosis. Acts via LRP-1/alpha2M receptor, also known as TGF-beta type V receptor, to mediate cell growth inhibition independent of IGF1. Mechanistically, induces serine-specific dephosphorylation of IRS1 or IRS2 upon ligation to its receptor, leading to the inhibitory cascade. In the nucleus, interacts with transcription factors such as retinoid X receptor-alpha/RXRA to regulate transcriptional signaling and apoptosis. This Bos taurus (Bovine) protein is Insulin-like growth factor-binding protein 3 (IGFBP3).